The primary structure comprises 201 residues: Glycerol-3-phosphate acyltransferase (201 aa).

Transmembrane regions (helical) follow at residues 10-30 (MLIGALIFGYVLGSIPFGLIL), 60-80 (LAAATLILDALKGTAAALIAA), 86-106 (AAIAAGFGAFIGHLFPVWIGF), 116-136 (LGVLIGLAWAGALVFAAAWIV), and 166-186 (ALAALFAIMTVIVFIKHRANI).

The protein belongs to the PlsY family. Probably interacts with PlsX.

It is found in the cell inner membrane. The enzyme catalyses an acyl phosphate + sn-glycerol 3-phosphate = a 1-acyl-sn-glycero-3-phosphate + phosphate. Its pathway is lipid metabolism; phospholipid metabolism. Its function is as follows. Catalyzes the transfer of an acyl group from acyl-phosphate (acyl-PO(4)) to glycerol-3-phosphate (G3P) to form lysophosphatidic acid (LPA). This enzyme utilizes acyl-phosphate as fatty acyl donor, but not acyl-CoA or acyl-ACP. The sequence is that of Glycerol-3-phosphate acyltransferase from Brucella canis (strain ATCC 23365 / NCTC 10854 / RM-666).